A 194-amino-acid polypeptide reads, in one-letter code: GTP cyclohydrolase 1 (194 aa).

Zn(2+)-binding residues include Cys83, His86, and Cys155.

The protein belongs to the GTP cyclohydrolase I family. Toroid-shaped homodecamer, composed of two pentamers of five dimers.

The catalysed reaction is GTP + H2O = 7,8-dihydroneopterin 3'-triphosphate + formate + H(+). The protein operates within cofactor biosynthesis; 7,8-dihydroneopterin triphosphate biosynthesis; 7,8-dihydroneopterin triphosphate from GTP: step 1/1. This Streptococcus pyogenes serotype M3 (strain ATCC BAA-595 / MGAS315) protein is GTP cyclohydrolase 1.